Here is a 275-residue protein sequence, read N- to C-terminus: Large ribosomal subunit protein uL2 (275 aa).

Disordered stretches follow at residues 35–55 (EKQT…RHKG) and 223–260 (VAMN…KTRN). Polar residues predominate over residues 39-49 (RSSGRNNQGRV).

This sequence belongs to the universal ribosomal protein uL2 family. As to quaternary structure, part of the 50S ribosomal subunit. Forms a bridge to the 30S subunit in the 70S ribosome.

In terms of biological role, one of the primary rRNA binding proteins. Required for association of the 30S and 50S subunits to form the 70S ribosome, for tRNA binding and peptide bond formation. It has been suggested to have peptidyltransferase activity; this is somewhat controversial. Makes several contacts with the 16S rRNA in the 70S ribosome. In Methylococcus capsulatus (strain ATCC 33009 / NCIMB 11132 / Bath), this protein is Large ribosomal subunit protein uL2.